We begin with the raw amino-acid sequence, 75 residues long: Small ribosomal subunit protein bS18 (75 aa).

It belongs to the bacterial ribosomal protein bS18 family. Part of the 30S ribosomal subunit. Forms a tight heterodimer with protein bS6.

Functionally, binds as a heterodimer with protein bS6 to the central domain of the 16S rRNA, where it helps stabilize the platform of the 30S subunit. This chain is Small ribosomal subunit protein bS18, found in Pseudoalteromonas translucida (strain TAC 125).